A 409-amino-acid chain; its full sequence is Elongation factor Tu (409 aa).

The 205-residue stretch at 10 to 214 (KPHVNIGTIG…EVDGYIPQPE (205 aa)) folds into the tr-type G domain. The interval 19-26 (GHVDHGKT) is G1. Position 19-26 (19-26 (GHVDHGKT)) interacts with GTP. Thr26 is a Mg(2+) binding site. The tract at residues 60–64 (GITIN) is G2. A G3 region spans residues 81-84 (DCPG). GTP is bound by residues 81-85 (DCPGH) and 136-139 (NKQD). The segment at 136–139 (NKQD) is G4. Positions 174–176 (SAL) are G5.

The protein belongs to the TRAFAC class translation factor GTPase superfamily. Classic translation factor GTPase family. EF-Tu/EF-1A subfamily. Monomer.

The protein resides in the cytoplasm. It catalyses the reaction GTP + H2O = GDP + phosphate + H(+). Functionally, GTP hydrolase that promotes the GTP-dependent binding of aminoacyl-tRNA to the A-site of ribosomes during protein biosynthesis. This chain is Elongation factor Tu, found in Trichodesmium erythraeum (strain IMS101).